A 453-amino-acid chain; its full sequence is Vacuolar cation/proton exchanger 1b (453 aa).

The Cytoplasmic portion of the chain corresponds to 1 to 67 (MPVSRMMMES…LRSLLANLND (67 aa)). The helical transmembrane segment at 68–85 (VLLTTRLFLLFPAVLLAI) threads the bilayer. The Extracellular segment spans residues 86–91 (AATYLH). The chain crosses the membrane as a helical span at residues 92 to 109 (FGQVWVFVLSLIGLVPLA). At 110–126 (ERLSFLTEQIAFYTGPT) the chain is on the cytoplasmic side. The helical transmembrane segment at 127–147 (VGGLLNATFGNVTEVIIALLA) threads the bilayer. Residues 136–171 (GNVTEVIIALLALREGKIEVVKCSLLGSILSNLLLV) are cation selection. Residues 148–160 (LREGKIEVVKCSL) lie on the Extracellular side of the membrane. A helical membrane pass occupies residues 161 to 181 (LGSILSNLLLVLGTSLFLAGI). At 182–194 (ANLRAHQPYDTKQ) the chain is on the cytoplasmic side. A helical transmembrane segment spans residues 195 to 215 (AHVNTALLMLAVLCHSLPLML). Topologically, residues 216-232 (RYAVTSGDHAIVSGDAA) are extracellular. The chain crosses the membrane as a helical span at residues 233-253 (LHLSRACSILMLIAYLAYLFF). At 254–283 (QLNTHRQLFEPQQVEDDDDDDLVIAQDDEP) the chain is on the cytoplasmic side. The chain crosses the membrane as a helical span at residues 284–304 (VLGFSSAMIWLALMTLLTALL). Over 305–327 (SGYVVSTIEAASESWELSVSFIS) the chain is Extracellular. Residues 328–348 (IILLPIVGNAAEHAGAVIFAL) form a helical membrane-spanning segment. The tract at residues 335 to 370 (GNAAEHAGAVIFALKNKMDITLGVSLGSATQISMFV) is cation selection. The Cytoplasmic portion of the chain corresponds to 349-364 (KNKMDITLGVSLGSAT). The chain crosses the membrane as a helical span at residues 365-385 (QISMFVVPVSVIVAWTMGIPM). Residues 386-388 (DLD) lie on the Extracellular side of the membrane. Residues 389–409 (FNLLETGSLFLAILVTAFTLQ) form a helical membrane-spanning segment. Residues 410–414 (EGESH) lie on the Cytoplasmic side of the membrane. The helical transmembrane segment at 415–435 (YLKGLILVLCYAVISVCFFVI) threads the bilayer. The Extracellular portion of the chain corresponds to 436-453 (RRRSAGGTDGVHHLDVIV).

The protein belongs to the Ca(2+):cation antiporter (CaCA) (TC 2.A.19) family. Cation/proton exchanger (CAX) subfamily. As to expression, expressed in embryo and roots.

It localises to the vacuole membrane. Functionally, vacuolar cation/proton exchanger (CAX). Translocates Ca(2+) and other metal ions into vacuoles using the proton gradient formed by H(+)-ATPase and H(+)-pyrophosphatase. The polypeptide is Vacuolar cation/proton exchanger 1b (CAX1b) (Oryza sativa subsp. japonica (Rice)).